Here is a 34-residue protein sequence, read N- to C-terminus: Photosystem II reaction center protein Y (34 aa).

Over 1 to 4 (MDIR) the chain is Lumenal. The helical transmembrane segment at 5–23 (LLIVLLPVLAAASWALYNI) threads the bilayer. Over 24–34 (GRVALQQFRSM) the chain is Stromal.

It belongs to the PsbY family. As to quaternary structure, PSII is composed of 1 copy each of membrane proteins PsbA, PsbB, PsbC, PsbD, PsbE, PsbF, PsbH, PsbI, PsbJ, PsbK, PsbL, PsbM, PsbT, PsbX, PsbY, PsbZ, Psb30/Ycf12, at least 3 peripheral proteins of the oxygen-evolving complex and a large number of cofactors. It forms dimeric complexes.

It is found in the plastid. Its subcellular location is the chloroplast thylakoid membrane. Its function is as follows. Loosely associated component of the core of photosystem II (PSII), it is not always seen in crystals. PSII is a light-driven water plastoquinone oxidoreductase, using light energy to abstract electrons from H(2)O, generating a proton gradient subsequently used for ATP formation. The polypeptide is Photosystem II reaction center protein Y (Gracilaria tenuistipitata var. liui (Red alga)).